A 307-amino-acid polypeptide reads, in one-letter code: NAD kinase (307 aa).

The active-site Proton acceptor is aspartate 78. NAD(+) contacts are provided by residues 78–79 (DG), histidine 83, 154–155 (NE), arginine 165, arginine 182, aspartate 184, and glutamine 255.

Belongs to the NAD kinase family. A divalent metal cation serves as cofactor.

The protein localises to the cytoplasm. It catalyses the reaction NAD(+) + ATP = ADP + NADP(+) + H(+). Its function is as follows. Involved in the regulation of the intracellular balance of NAD and NADP, and is a key enzyme in the biosynthesis of NADP. Catalyzes specifically the phosphorylation on 2'-hydroxyl of the adenosine moiety of NAD to yield NADP. In Halorhodospira halophila (strain DSM 244 / SL1) (Ectothiorhodospira halophila (strain DSM 244 / SL1)), this protein is NAD kinase.